A 178-amino-acid chain; its full sequence is Histone H3-like centromeric protein CENH3 (178 aa).

Positions methionine 1–arginine 81 are disordered. Lysine 5 is subject to N6,N6,N6-trimethyllysine; alternate. Lysine 5 is modified (N6,N6-dimethyllysine; alternate). N6-methyllysine; alternate is present on lysine 5. Serine 11 carries the post-translational modification Phosphoserine. Low complexity predominate over residues glutamine 16–arginine 36. The span at aspartate 43 to threonine 56 shows a compositional bias: polar residues. N6-methyllysine; alternate is present on residues lysine 63 and lysine 75. At lysine 63 the chain carries N6-acetyllysine; alternate. The residue at position 75 (lysine 75) is an N6,N6,N6-trimethyllysine; alternate. Lysine 75 bears the N6,N6-dimethyllysine; alternate mark.

Belongs to the histone H3 family. Forms a nucleosome-like histone octamer containing two molecules each of H2A, H2B, CENH3 and H4 assembled in one CENH3-H4 heterotetramer and two H2A-H2B heterodimers. Interacts with ORTH2.

It is found in the chromosome. The protein resides in the centromere. The protein localises to the kinetochore. Histone H3-like variant which exclusively replaces conventional H3 in the nucleosome core of centromeric chromatin at the inner plate of the kinetochore. Required for recruitment and assembly of kinetochore proteins, mitotic progression and chromosome segregation. May serve as an epigenetic mark that propagates centromere identity through replication and cell division. The protein is Histone H3-like centromeric protein CENH3 of Arabidopsis thaliana (Mouse-ear cress).